We begin with the raw amino-acid sequence, 751 residues long: Glutathione biosynthesis bifunctional protein GshAB (751 aa).

The segment at 1–336 (MELDAVGKAI…QADQLTRQVL (336 aa)) is glutamate--cysteine ligase.

In the N-terminal section; belongs to the glutamate--cysteine ligase type 1 family. Type 2 subfamily. As to quaternary structure, monomer.

It catalyses the reaction L-cysteine + L-glutamate + ATP = gamma-L-glutamyl-L-cysteine + ADP + phosphate + H(+). It carries out the reaction gamma-L-glutamyl-L-cysteine + glycine + ATP = glutathione + ADP + phosphate + H(+). It functions in the pathway sulfur metabolism; glutathione biosynthesis; glutathione from L-cysteine and L-glutamate: step 1/2. Its pathway is sulfur metabolism; glutathione biosynthesis; glutathione from L-cysteine and L-glutamate: step 2/2. Functionally, synthesizes glutathione from L-glutamate and L-cysteine via gamma-L-glutamyl-L-cysteine. The polypeptide is Glutathione biosynthesis bifunctional protein GshAB (gshAB) (Lactiplantibacillus plantarum (strain ATCC BAA-793 / NCIMB 8826 / WCFS1) (Lactobacillus plantarum)).